Reading from the N-terminus, the 375-residue chain is Glutamate 5-kinase (375 aa).

Residue K17 coordinates ATP. 3 residues coordinate substrate: S57, D144, and N158. 178–179 contributes to the ATP binding site; the sequence is TD. The region spanning 284–360 is the PUA domain; that stretch reads SGSIVVDTGA…NEIADILGYK (77 aa).

This sequence belongs to the glutamate 5-kinase family.

It localises to the cytoplasm. The catalysed reaction is L-glutamate + ATP = L-glutamyl 5-phosphate + ADP. It functions in the pathway amino-acid biosynthesis; L-proline biosynthesis; L-glutamate 5-semialdehyde from L-glutamate: step 1/2. Catalyzes the transfer of a phosphate group to glutamate to form L-glutamate 5-phosphate. The chain is Glutamate 5-kinase from Methanococcoides burtonii (strain DSM 6242 / NBRC 107633 / OCM 468 / ACE-M).